Reading from the N-terminus, the 186-residue chain is Tumor necrosis factor alpha-induced protein 8-like protein 1 (186 aa).

Positions 37-70 (EVLDELYRVTKEYTRNRKEAQKIIKNLIKMVVKL) form a coiled coil.

The protein belongs to the TNFAIP8 family.

The protein resides in the cytoplasm. In Danio rerio (Zebrafish), this protein is Tumor necrosis factor alpha-induced protein 8-like protein 1 (tnfaip8l1).